The chain runs to 129 residues: Small ribosomal subunit protein uS11 (129 aa).

This sequence belongs to the universal ribosomal protein uS11 family. Part of the 30S ribosomal subunit. Interacts with proteins S7 and S18. Binds to IF-3.

In terms of biological role, located on the platform of the 30S subunit, it bridges several disparate RNA helices of the 16S rRNA. Forms part of the Shine-Dalgarno cleft in the 70S ribosome. This chain is Small ribosomal subunit protein uS11, found in Desulfovibrio desulfuricans (strain ATCC 27774 / DSM 6949 / MB).